We begin with the raw amino-acid sequence, 358 residues long: Gibberellin receptor GID1B (358 aa).

At Ala2 the chain carries N-acetylalanine. The short motif at 113–115 (HGG) is the Involved in the stabilization of the negatively charged intermediate by the formation of the oxyanion hole element. Gibberellin A4-binding positions include 115–116 (GS), Tyr127, and Ser191. Residues Ser116, Tyr127, Ser191, and Phe238 each contribute to the gibberellin A3 site. Ser191 is a catalytic residue. Residue Asp289 is part of the active site. Gly320 provides a ligand contact to gibberellin A4. Gly320 lines the gibberellin A3 pocket.

Belongs to the 'GDXG' lipolytic enzyme family. In terms of assembly, interacts with the DELLA proteins GAI, RGA, RGL1, RGL2 and RGL3 in a GA-dependent manner. In terms of tissue distribution, widely expressed.

It is found in the nucleus. Functions as a soluble gibberellin (GA) receptor. GA is an essential hormone that regulates growth and development in plants. Binds with high affinity the biologically active gibberellin GA4, but has no affinity for the biologically inactive GAs. In response to GA, interacts with specific DELLA proteins, known as repressors of GA-induced growth, and targets them for degradation via proteasome. Seems to be required for GA signaling that controls root growth, seed germination and flower development. May function as a dominant GA receptor at low GA concentrations in germination. Partially redundant with GID1A and GID1C. In Arabidopsis thaliana (Mouse-ear cress), this protein is Gibberellin receptor GID1B (GID1B).